The primary structure comprises 1181 residues: Pesticidal crystal protein Cry1Ae (1181 aa).

Belongs to the delta endotoxin family.

In terms of biological role, promotes colloidosmotic lysis by binding to the midgut epithelial cells of many lepidopteran larvae. The sequence is that of Pesticidal crystal protein Cry1Ae (cry1Ae) from Bacillus thuringiensis subsp. alesti.